A 334-amino-acid polypeptide reads, in one-letter code: YbbR-like domain-containing protein BB_0009 (334 aa).

A helical transmembrane segment spans residues 22–38; that stretch reads AISILIAILMFVAFNFN. YbbR-like domains follow at residues 43–128 and 138–220; these read ITTE…NVLL and VKIE…VVNI.

The protein localises to the membrane. In Borreliella burgdorferi (strain ATCC 35210 / DSM 4680 / CIP 102532 / B31) (Borrelia burgdorferi), this protein is YbbR-like domain-containing protein BB_0009.